The chain runs to 32 residues: Cyclotide glopa B (32 aa).

Residues Gly-1–Asn-32 constitute a cross-link (cyclopeptide (Gly-Asn)). Intrachain disulfides connect Cys-6/Cys-21, Cys-10/Cys-23, and Cys-15/Cys-29.

In terms of processing, this is a cyclic peptide.

Probably participates in a plant defense mechanism. The chain is Cyclotide glopa B from Gloeospermum pauciflorum.